The chain runs to 282 residues: MKLLRYGPPGQEKPGILDAAGRIRDLSAHVPDLAGEVLSDAGLARLRAIDPATLPLVSGEPRIGACVGHVGKFIGIGLNYADHAAEAGMPVPKEPVVFGKWTSSICGPNDGIDIPKGSVKTDWEVELGVVIGAKCKDVDEARALDYVAGYCVVNDVSEREWQIERGGQWDKGKGFDTFGPIGPWLVTRDEVPDPQRLDLWLEIDGHRYQNGNTRTMVFTVAQLIAYLSTCMTLQPGDVITTGTPPGVGMGIKPSPVFLKAGQMVRLGIDGLGEQLQSTRHAQ.

Mg(2+) contacts are provided by Glu124, Glu126, and Asp155.

Belongs to the FAH family. Requires Mg(2+) as cofactor.

The polypeptide is Putative hydrolase BceJ2315_61450 (Burkholderia cenocepacia (strain ATCC BAA-245 / DSM 16553 / LMG 16656 / NCTC 13227 / J2315 / CF5610) (Burkholderia cepacia (strain J2315))).